Consider the following 346-residue polypeptide: Histone H1.8 (346 aa).

Composition is skewed to low complexity over residues 1-23 (MAPG…SSRS) and 38-48 (PGGPSHSSLPV). 2 disordered regions span residues 1–50 (MAPG…PVGR) and 121–346 (ATGS…RAEA). The region spanning 51–129 (RHPPVLRMVL…GATGSFKLVP (79 aa)) is the H15 domain. The segment covering 128–137 (VPKHKKKIQP) has biased composition (basic residues). Positions 148-167 (RAGEAKGKGPKKPSEAKEDP) are enriched in basic and acidic residues. The Nuclear localization signal motif lies at 164–179 (KEDPPNVGKVKKAAKR). Positions 172 to 182 (KVKKAAKRPAK) are enriched in basic residues. Composition is skewed to basic and acidic residues over residues 205 to 225 (KDTR…DKAM) and 251 to 262 (EAYRKTKAESKS). The span at 278–288 (TKKKVVAKAKA) shows a compositional bias: basic residues. Residues 298 to 309 (KAAAPAKGSGSK) show a composition bias toward low complexity. The span at 334–346 (ASSSKVSSQRAEA) shows a compositional bias: polar residues.

The protein belongs to the histone H1/H5 family. In terms of tissue distribution, oocyte-specific.

It is found in the cytoplasm. The protein resides in the nucleus. It localises to the chromosome. Its function is as follows. May play a key role in the control of gene expression during oogenesis and early embryogenesis, presumably through the perturbation of chromatin structure. Essential for meiotic maturation of germinal vesicle-stage oocytes. The somatic type linker histone H1c is rapidly replaced by H1oo in a donor nucleus transplanted into an oocyte. The greater mobility of H1oo as compared to H1c may contribute to this rapid replacement and increased instability of the embryonic chromatin structure. The rapid replacement of H1c with H1oo may play an important role in nuclear remodeling. This Homo sapiens (Human) protein is Histone H1.8.